Reading from the N-terminus, the 143-residue chain is UPF0201 protein Pisl_1658 (143 aa).

It belongs to the UPF0201 family.

This Pyrobaculum islandicum (strain DSM 4184 / JCM 9189 / GEO3) protein is UPF0201 protein Pisl_1658.